Consider the following 386-residue polypeptide: Patatin-10 (386 aa).

An N-terminal signal peptide occupies residues 1-23 (MATTKSFLILFFMILATTSSTCA). Positions 32-229 (LSIDGGGIKG…TVGDPALLSL (198 aa)) constitute a PNPLA domain. A GXGXXG motif is present at residues 36–41 (GGGIKG). The short motif at 75-79 (GTSTG) is the GXSXG element. Ser-77 functions as the Nucleophile in the catalytic mechanism. Asn-115 is a glycosylation site (N-linked (GlcNAc...) asparagine). The Proton acceptor role is filled by Asp-215. Positions 215 to 217 (DGG) match the DGA/G motif. Positions 321 to 384 (ENALTGTTTE…NRKKLRANKA (64 aa)) form a coiled coil.

Belongs to the patatin family. As to expression, tuber.

It is found in the vacuole. Probable lipolytic acyl hydrolase (LAH), an activity which is thought to be involved in the response of tubers to pathogens. This chain is Patatin-10, found in Solanum tuberosum (Potato).